Here is a 1522-residue protein sequence, read N- to C-terminus: DNA topoisomerase 2-binding protein 1 (1522 aa).

BRCT domains follow at residues 101 to 189 (VYNM…RYTD) and 195 to 284 (FKCP…IYKT). Thr298 is modified (phosphothreonine). Ser301 carries the post-translational modification Phosphoserine. 3 consecutive BRCT domains span residues 354–444 (APED…PYIH), 548–633 (TEEG…SNPL), and 641–738 (TGMT…HFLI). The interval 756–891 (INLNSDTAEH…AVALSASPQL (136 aa)) is interaction with CIP2A. A phosphothreonine mark is found at Thr779 and Thr848. The short motif at 852-858 (PSQQKRK) is the Nuclear localization signal element. Phosphoserine is present on Ser860. Thr861 carries the post-translational modification Phosphothreonine. 3 positions are modified to phosphoserine: Ser864, Ser886, and Ser888. Residues 900–991 (EAPKPLHKVV…KHLPESLYPH (92 aa)) form the BRCT 6 domain. A Phosphoserine modification is found at Ser1002. The tract at residues 1018-1058 (VSSTKDDEPDPLILEENDVDNMATNNKESAPSNGSGKNDSK) is disordered. Residues 1024–1036 (DEPDPLILEENDV) show a composition bias toward acidic residues. Residues 1039 to 1058 (MATNNKESAPSNGSGKNDSK) are compositionally biased toward polar residues. A phosphothreonine mark is found at Thr1062 and Thr1064. The segment covering 1083–1114 (SIVKPQGQRTSLSRSGCNSASSTPDSTRSARS) has biased composition (polar residues). The disordered stretch occupies residues 1083-1118 (SIVKPQGQRTSLSRSGCNSASSTPDSTRSARSGRSR). BRCT domains lie at 1259 to 1351 (ETHE…DYEW) and 1389 to 1486 (IVEG…NYCL). A disordered region spans residues 1501 to 1522 (TGLSQKRKAPTEKNKIKRPRVH). A Phosphoserine modification is found at Ser1504. A Nuclear localization signal motif is present at residues 1517-1520 (KRPR).

It belongs to the TOPBP1 family. As to quaternary structure, interacts (via BRCT domains 1 and 2) with (phosphorylated) MDC1; promoting TOPBP1 recruitment to DNA damage sites during mitosis. Interacts (via BRCT domains 7 and 8) with (autophosphorylated) ATR; promoting activation of ATR. Interacts (via BRCT domains 7 and 8) with (phosphorylated) POLQ; specifically binds POLQ phosphorylated by PLK1, promoting POLQ recruitment to DNA damage sites. Interacts (via BRCT domains 1 and 2) with (phosphorylated) RAD9A. Interacts (via BRCT domain 2) with (phosphorylated) TP53BP1. Interacts (via BRCT domain 2) with (phosphorylated) HTATSF1. Interacts (via BRCT domains 7 and 8) with (phosphorylated) RAD51; promoting RAD51 recruitment to damaged chromatin. Interacts with CIP2A; forming the CIP2A-TOPBP1 complex. Interacts with POLE. Interacts with UBR5. Interacts with E2F1. Interacts with PML. Interacts with SMARCA2. Interacts with SMARCA4. Interacts with RHNO1. May interact with TOP2B. Interacts with TICRR. Interacts with HELB. Interacts (via residues 1233-1522) with RECQL4. In terms of processing, phosphorylated on serine and threonine residues in response to X-ray irradiation. Ubiquitinated and degraded by the proteasome. X-ray irradiation reduces ubiquitination. Deubiquitinated by USP13; leading to TOPBP1 stabilizion and activation of the ATR-TOPBP1 axis pathway. In terms of tissue distribution, highly expressed in heart, brain, placenta, lung and kidney.

It is found in the nucleus. The protein resides in the chromosome. It localises to the cytoplasm. Its subcellular location is the cytoskeleton. The protein localises to the microtubule organizing center. It is found in the centrosome. The protein resides in the spindle pole. In terms of biological role, scaffold protein that acts as a key protein-protein adapter in DNA replication and DNA repair. Composed of multiple BRCT domains, which specifically recognize and bind phosphorylated proteins, bringing proteins together into functional combinations. Required for DNA replication initiation but not for the formation of pre-replicative complexes or the elongation stages. Necessary for the loading of replication factors onto chromatin, including GMNC, CDC45, DNA polymerases and components of the GINS complex. Plays a central role in DNA repair by bridging proteins and promoting recruitment of proteins to DNA damage sites. Involved in double-strand break (DSB) repair via homologous recombination in S-phase by promoting the exchange between the DNA replication factor A (RPA) complex and RAD51. Mechanistically, TOPBP1 is recruited to DNA damage sites in S-phase via interaction with phosphorylated HTATSF1, and promotes the loading of RAD51, thereby facilitating RAD51 nucleofilaments formation and RPA displacement, followed by homologous recombination. Involved in microhomology-mediated end-joining (MMEJ) DNA repair by promoting recruitment of polymerase theta (POLQ) to DNA damage sites during mitosis. MMEJ is an alternative non-homologous end-joining (NHEJ) machinery that takes place during mitosis to repair DSBs in DNA that originate in S-phase. Recognizes and binds POLQ phosphorylated by PLK1, enabling its recruitment to DSBs for subsequent repair. Involved in G1 DNA damage checkpoint by acting as a molecular adapter that couples TP53BP1 and the 9-1-1 complex. In response to DNA damage, triggers the recruitment of checkpoint signaling proteins on chromatin, which activate the CHEK1 signaling pathway and block S-phase progression. Acts as an activator of the kinase activity of ATR. Also required for chromosomal stability when DSBs occur during mitosis by forming filamentous assemblies that bridge MDC1 and tether broken chromosomes during mitosis. Together with CIP2A, plays an essential role in the response to genome instability generated by the presence of acentric chromosome fragments derived from shattered chromosomes within micronuclei. Micronuclei, which are frequently found in cancer cells, consist of chromatin surrounded by their own nuclear membrane: following breakdown of the micronuclear envelope, a process associated with chromothripsis, the CIP2A-TOPBP1 complex tethers chromosome fragments during mitosis to ensure clustered segregation of the fragments to a single daughter cell nucleus, facilitating re-ligation with limited chromosome scattering and loss. Recruits the SWI/SNF chromatin remodeling complex to E2F1-responsive promoters, thereby down-regulating E2F1 activity and inhibiting E2F1-dependent apoptosis during G1/S transition and after DNA damage. The protein is DNA topoisomerase 2-binding protein 1 of Homo sapiens (Human).